The primary structure comprises 152 residues: CASP-like protein 5C3 (152 aa).

Topologically, residues 1-17 are cytoplasmic; the sequence is MVEVPGSVGTTASLSLR. Residues 18–38 form a helical membrane-spanning segment; it reads LGQMVLAFGSLLFMTIGVRFY. Residues 39 to 42 lie on the Extracellular side of the membrane; the sequence is QFTA. A helical transmembrane segment spans residues 43-63; that stretch reads FCYLVTIMSLAIPWNLTLAMV. Residues 64–78 are Cytoplasmic-facing; that stretch reads DIYCVILQQPFQKPR. The chain crosses the membrane as a helical span at residues 79–99; that stretch reads ILLAISIGDWVVSVLALASAS. The Extracellular portion of the chain corresponds to 100 to 128; sequence SAASVVDILRSNESSCPPTICNRYQFAAT. Residue Asn111 is glycosylated (N-linked (GlcNAc...) asparagine). A helical transmembrane segment spans residues 129–149; it reads LAFLTWFLSLSSSLFNLWLLP. Residues 150-152 lie on the Cytoplasmic side of the membrane; sequence SLI.

The protein belongs to the Casparian strip membrane proteins (CASP) family. In terms of assembly, homodimer and heterodimers. Expressed in the floral organ abscission zone and flower buds.

It localises to the cell membrane. This chain is CASP-like protein 5C3, found in Arabidopsis thaliana (Mouse-ear cress).